The primary structure comprises 356 residues: Histidinol-phosphate aminotransferase (356 aa).

Lys214 is modified (N6-(pyridoxal phosphate)lysine).

The protein belongs to the class-II pyridoxal-phosphate-dependent aminotransferase family. Histidinol-phosphate aminotransferase subfamily. As to quaternary structure, homodimer. The cofactor is pyridoxal 5'-phosphate.

The catalysed reaction is L-histidinol phosphate + 2-oxoglutarate = 3-(imidazol-4-yl)-2-oxopropyl phosphate + L-glutamate. The protein operates within amino-acid biosynthesis; L-histidine biosynthesis; L-histidine from 5-phospho-alpha-D-ribose 1-diphosphate: step 7/9. This is Histidinol-phosphate aminotransferase from Shigella dysenteriae serotype 1 (strain Sd197).